The following is a 610-amino-acid chain: tRNA uridine 5-carboxymethylaminomethyl modification enzyme MnmG (610 aa).

14-19 (GAGHAG) provides a ligand contact to FAD. 274–288 (GPRYCPSIEDKIVKF) contributes to the NAD(+) binding site.

This sequence belongs to the MnmG family. In terms of assembly, homodimer. Heterotetramer of two MnmE and two MnmG subunits. The cofactor is FAD.

The protein resides in the cytoplasm. In terms of biological role, NAD-binding protein involved in the addition of a carboxymethylaminomethyl (cmnm) group at the wobble position (U34) of certain tRNAs, forming tRNA-cmnm(5)s(2)U34. This Chlamydia trachomatis serovar A (strain ATCC VR-571B / DSM 19440 / HAR-13) protein is tRNA uridine 5-carboxymethylaminomethyl modification enzyme MnmG.